A 251-amino-acid polypeptide reads, in one-letter code: GTP cyclohydrolase FolE2 (251 aa).

This sequence belongs to the GTP cyclohydrolase IV family.

The enzyme catalyses GTP + H2O = 7,8-dihydroneopterin 3'-triphosphate + formate + H(+). It participates in cofactor biosynthesis; 7,8-dihydroneopterin triphosphate biosynthesis; 7,8-dihydroneopterin triphosphate from GTP: step 1/1. Converts GTP to 7,8-dihydroneopterin triphosphate. In Desulfotalea psychrophila (strain LSv54 / DSM 12343), this protein is GTP cyclohydrolase FolE2.